A 127-amino-acid polypeptide reads, in one-letter code: Major sperm protein 19/31/40/45/50/51/53/59/61/65/81/113/142 (127 aa).

A2 is modified (N-acetylalanine). Positions 9-126 constitute an MSP domain; the sequence is DIQTQPGTKI…RRKNLPIEYN (118 aa).

In terms of assembly, helical subfilaments are built from MSP dimers; filaments are formed from two subfilaments coiling round one another; and filaments themselves supercoil to produce bundles. As to expression, sperm.

It localises to the cell projection. Its subcellular location is the pseudopodium. It is found in the cytoplasm. The protein resides in the cytoskeleton. Its function is as follows. Central component in molecular interactions underlying sperm crawling. Forms an extensive filament system that extends from sperm villipoda, along the leading edge of the pseudopod. This chain is Major sperm protein 19/31/40/45/50/51/53/59/61/65/81/113/142 (msp-19), found in Caenorhabditis elegans.